The primary structure comprises 220 residues: Protein US2 homolog (220 aa).

This sequence belongs to the herpesviridae US2 family.

This Bovine herpesvirus 1.2 (strain ST) (BoHV-1) protein is Protein US2 homolog.